The sequence spans 119 residues: Large ribosomal subunit protein bL20 (119 aa).

The protein belongs to the bacterial ribosomal protein bL20 family.

In terms of biological role, binds directly to 23S ribosomal RNA and is necessary for the in vitro assembly process of the 50S ribosomal subunit. It is not involved in the protein synthesizing functions of that subunit. The protein is Large ribosomal subunit protein bL20 of Xanthomonas oryzae pv. oryzae (strain KACC10331 / KXO85).